The chain runs to 528 residues: GMP synthase [glutamine-hydrolyzing] (528 aa).

The 192-residue stretch at 13 to 204 (AIVILDFGSQ…VYHICGCEPD (192 aa)) folds into the Glutamine amidotransferase type-1 domain. Cys90 functions as the Nucleophile in the catalytic mechanism. Catalysis depends on residues His178 and Glu180. The GMPS ATP-PPase domain occupies 205–403 (WTTSAFIDEA…LGLPEEIVRR (199 aa)). Residue 232–238 (SGGVDSS) participates in ATP binding.

Homodimer.

It carries out the reaction XMP + L-glutamine + ATP + H2O = GMP + L-glutamate + AMP + diphosphate + 2 H(+). It functions in the pathway purine metabolism; GMP biosynthesis; GMP from XMP (L-Gln route): step 1/1. In terms of biological role, catalyzes the synthesis of GMP from XMP. This is GMP synthase [glutamine-hydrolyzing] from Parasynechococcus marenigrum (strain WH8102).